The primary structure comprises 333 residues: Fructose-1,6-bisphosphatase class 1 (333 aa).

Mg(2+)-binding residues include E89, D112, L114, and D115. Substrate is bound by residues 115-118, N208, Y241, and K271; that span reads DGSS. Mg(2+) is bound at residue E277.

Belongs to the FBPase class 1 family. As to quaternary structure, homotetramer. It depends on Mg(2+) as a cofactor.

Its subcellular location is the cytoplasm. It catalyses the reaction beta-D-fructose 1,6-bisphosphate + H2O = beta-D-fructose 6-phosphate + phosphate. It functions in the pathway carbohydrate biosynthesis; gluconeogenesis. This chain is Fructose-1,6-bisphosphatase class 1, found in Haemophilus influenzae (strain ATCC 51907 / DSM 11121 / KW20 / Rd).